The chain runs to 352 residues: Ubiquitin thioesterase otulin (352 aa).

The interval 1–49 (MSRGTMPQPGAWPGASCAETPAREAGAAARDGGKVTAGAQPRAATRCPA) is disordered. Residues 18–30 (AETPAREAGAAAR) are compositionally biased toward low complexity. A coiled-coil region spans residues 49-73 (AEHEEDMYRAADEIEKEKELLIHER). Residues 52-57 (EEDMYR) carry the PIM motif motif. Tyr-56 is modified (phosphotyrosine). 2 linear diubiquitin binding regions span residues 95 to 96 (EW) and 124 to 126 (RGD). The OTU domain maps to 118–346 (TSIRRVRGDN…DRHYNIPVRV (229 aa)). Asp-126 is a catalytic residue. The active-site Nucleophile is Cys-129. 3 linear diubiquitin binding regions span residues 255-259 (FFSVL), 283-289 (TGGLEQV), and 336-338 (DDR). His-339 is an active-site residue. The PDZ-binding signature appears at 349–352 (ETSV).

This sequence belongs to the peptidase C65 family. Otulin subfamily. In terms of assembly, interacts (via the PUB domain) with RNF31 (via the PIM motif); the interaction is direct. Interacts with DVL2. Post-translationally, ubiquitinated. In terms of processing, acetylated. Phosphorylated. Phosphorylation at Tyr-56 prevents interaction with RNF31; dephosphorylation promotes interaction with RNF31 and the LUBAC complex.

It is found in the cytoplasm. The enzyme catalyses Thiol-dependent hydrolysis of ester, thioester, amide, peptide and isopeptide bonds formed by the C-terminal Gly of ubiquitin (a 76-residue protein attached to proteins as an intracellular targeting signal).. In terms of biological role, deubiquitinase that specifically removes linear ('Met-1'-linked) polyubiquitin chains to substrates and acts as a regulator of angiogenesis and innate immune response. Required during angiogenesis, craniofacial and neuronal development by regulating the canonical Wnt signaling together with the LUBAC complex. Acts as a negative regulator of NF-kappa-B by regulating the activity of the LUBAC complex. OTULIN function is mainly restricted to homeostasis of the LUBAC complex: acts by removing 'Met-1'-linked autoubiquitination of the LUBAC complex, thereby preventing inactivation of the LUBAC complex. Acts as a key negative regulator of inflammation by restricting spontaneous inflammation and maintaining immune homeostasis. In myeloid cell, required to prevent unwarranted secretion of cytokines leading to inflammation and autoimmunity by restricting linear polyubiquitin formation. Plays a role in innate immune response by restricting linear polyubiquitin formation on LUBAC complex in response to NOD2 stimulation, probably to limit NOD2-dependent pro-inflammatory signaling. This Mus musculus (Mouse) protein is Ubiquitin thioesterase otulin.